The chain runs to 241 residues: MILRKKLSYLWTLGLCLVASKSPPKAPSITNDRFIEECLRLHNEARTNVSPPAADMKYMSWDEALAKTAEAWAKKCKFIHNSCSSKSFKCHPTFQYAGENLWLGPLTISAAKFAINMWYDERKFYDFNTRSCSQVCGHYTQVVWAYSYKVGCAVAVCPNLGSPDSALLVCNYAPAGNYPNMSPYTNGTPCSMCQGDTCENNLCRNKERDKSQRYPNWNPSGTRQLIACNPLYLISVLLTIF.

Residues 1-22 (MILRKKLSYLWTLGLCLVASKS) form the signal peptide. The SCP domain maps to 39-172 (LRLHNEARTN…PDSALLVCNY (134 aa)). Ser220 carries the GPI-anchor amidated serine lipid modification. The propeptide at 221-241 (GTRQLIACNPLYLISVLLTIF) is removed in mature form.

This sequence belongs to the CRISP family. Part of a oolemmal binding multimeric complex (IZUMO1 complex) composed at least of IZUMO1 and GLIPR1L1; the complex assemblage is influenced by the maturation status of the male germ cell. Interacts with IZUMO1. N-glycosylated. N-glycosylation decreases during the transit in the caput. As to expression, highly expressed in testis, where it localizes to round and elongating spermatids and differentiated spermatozoa in the seminiferous tubules and epididymis (at protein level).

It is found in the cytoplasmic vesicle. It localises to the secretory vesicle. Its subcellular location is the acrosome. The protein localises to the cell membrane. The protein resides in the membrane raft. In terms of biological role, required for optimal fertilization at the stage of sperm-oocyte fusion, plays a role in optimizing acrosome function, the translocation of IZUMO1 during the acrosome reaction and the fertilization process. Component of epididymosomes, one type of membranous microvesicules which mediate the transfer of lipids and proteins to spermatozoa plasma membrane during epididymal maturation. Also a component of the CD9-positive microvesicules found in the cauda region. The chain is GLIPR1-like protein 1 from Bos taurus (Bovine).